Consider the following 210-residue polypeptide: Large ribosomal subunit protein uL3 (210 aa).

Residues 131–140 (NRASHGNSLS) are compositionally biased toward polar residues. Positions 131-150 (NRASHGNSLSHRAPGSIGCR) are disordered. N5-methylglutamine is present on Gln151.

Belongs to the universal ribosomal protein uL3 family. In terms of assembly, part of the 50S ribosomal subunit. Forms a cluster with proteins L14 and L19. In terms of processing, methylated by PrmB.

Functionally, one of the primary rRNA binding proteins, it binds directly near the 3'-end of the 23S rRNA, where it nucleates assembly of the 50S subunit. This is Large ribosomal subunit protein uL3 from Acidithiobacillus ferrooxidans (strain ATCC 23270 / DSM 14882 / CIP 104768 / NCIMB 8455) (Ferrobacillus ferrooxidans (strain ATCC 23270)).